A 471-amino-acid polypeptide reads, in one-letter code: UDP-N-acetylmuramate--L-alanine ligase (471 aa).

114 to 120 (GTHGKTT) lines the ATP pocket.

This sequence belongs to the MurCDEF family.

The protein localises to the cytoplasm. The catalysed reaction is UDP-N-acetyl-alpha-D-muramate + L-alanine + ATP = UDP-N-acetyl-alpha-D-muramoyl-L-alanine + ADP + phosphate + H(+). It participates in cell wall biogenesis; peptidoglycan biosynthesis. Functionally, cell wall formation. This is UDP-N-acetylmuramate--L-alanine ligase from Rhizobium johnstonii (strain DSM 114642 / LMG 32736 / 3841) (Rhizobium leguminosarum bv. viciae).